Here is a 352-residue protein sequence, read N- to C-terminus: 3-isopropylmalate dehydrogenase (352 aa).

76-89 (GYKWENLPHDKKPE) contributes to the NAD(+) binding site. Positions 96, 106, 134, and 220 each coordinate substrate. Residues Asp220, Asp244, and Asp248 each contribute to the Mg(2+) site. 277-289 (GSAPDIAGQNKAN) is a binding site for NAD(+).

It belongs to the isocitrate and isopropylmalate dehydrogenases family. LeuB type 1 subfamily. As to quaternary structure, homodimer. Mg(2+) is required as a cofactor. Requires Mn(2+) as cofactor.

Its subcellular location is the cytoplasm. The catalysed reaction is (2R,3S)-3-isopropylmalate + NAD(+) = 4-methyl-2-oxopentanoate + CO2 + NADH. It participates in amino-acid biosynthesis; L-leucine biosynthesis; L-leucine from 3-methyl-2-oxobutanoate: step 3/4. Its function is as follows. Catalyzes the oxidation of 3-carboxy-2-hydroxy-4-methylpentanoate (3-isopropylmalate) to 3-carboxy-4-methyl-2-oxopentanoate. The product decarboxylates to 4-methyl-2 oxopentanoate. This chain is 3-isopropylmalate dehydrogenase, found in Chlorobaculum tepidum (strain ATCC 49652 / DSM 12025 / NBRC 103806 / TLS) (Chlorobium tepidum).